Reading from the N-terminus, the 218-residue chain is 1-Cys peroxiredoxin PER1 (218 aa).

The 161-residue stretch at 4–164 (LTIGDTVPNL…VVRAVDSLLT (161 aa)) folds into the Thioredoxin domain. The active-site Cysteine sulfenic acid (-SOH) intermediate is Cys-46. Positions 194–217 (KKMFPQGFETADLPSKKGYLRFTK) match the Bipartite nuclear localization signal motif.

Belongs to the peroxiredoxin family. Prx6 subfamily.

Its subcellular location is the nucleus. The protein localises to the cytoplasm. It catalyses the reaction a hydroperoxide + [thioredoxin]-dithiol = an alcohol + [thioredoxin]-disulfide + H2O. In terms of biological role, thiol-specific peroxidase that catalyzes the reduction of hydrogen peroxide and organic hydroperoxides to water and alcohols, respectively. Seems to contribute to the inhibition of germination during stress. The sequence is that of 1-Cys peroxiredoxin PER1 (PER1) from Triticum aestivum (Wheat).